Reading from the N-terminus, the 367-residue chain is uncharacterized protein (367 aa).

This sequence belongs to the mimivirus L17x/L18x family.

This is an uncharacterized protein from Acanthamoeba polyphaga (Amoeba).